The chain runs to 213 residues: Probable transaldolase (213 aa).

K83 (schiff-base intermediate with substrate) is an active-site residue.

The protein belongs to the transaldolase family. Type 3B subfamily.

It is found in the cytoplasm. It catalyses the reaction D-sedoheptulose 7-phosphate + D-glyceraldehyde 3-phosphate = D-erythrose 4-phosphate + beta-D-fructose 6-phosphate. Its pathway is carbohydrate degradation; pentose phosphate pathway; D-glyceraldehyde 3-phosphate and beta-D-fructose 6-phosphate from D-ribose 5-phosphate and D-xylulose 5-phosphate (non-oxidative stage): step 2/3. In terms of biological role, transaldolase is important for the balance of metabolites in the pentose-phosphate pathway. The sequence is that of Probable transaldolase from Geobacillus thermodenitrificans (strain NG80-2).